The sequence spans 556 residues: 2-succinyl-5-enolpyruvyl-6-hydroxy-3-cyclohexene-1-carboxylate synthase (556 aa).

Belongs to the TPP enzyme family. MenD subfamily. In terms of assembly, homodimer. Requires Mg(2+) as cofactor. Mn(2+) is required as a cofactor. It depends on thiamine diphosphate as a cofactor.

The catalysed reaction is isochorismate + 2-oxoglutarate + H(+) = 5-enolpyruvoyl-6-hydroxy-2-succinyl-cyclohex-3-ene-1-carboxylate + CO2. The protein operates within quinol/quinone metabolism; 1,4-dihydroxy-2-naphthoate biosynthesis; 1,4-dihydroxy-2-naphthoate from chorismate: step 2/7. It functions in the pathway quinol/quinone metabolism; menaquinone biosynthesis. In terms of biological role, catalyzes the thiamine diphosphate-dependent decarboxylation of 2-oxoglutarate and the subsequent addition of the resulting succinic semialdehyde-thiamine pyrophosphate anion to isochorismate to yield 2-succinyl-5-enolpyruvyl-6-hydroxy-3-cyclohexene-1-carboxylate (SEPHCHC). This Shigella sonnei (strain Ss046) protein is 2-succinyl-5-enolpyruvyl-6-hydroxy-3-cyclohexene-1-carboxylate synthase.